We begin with the raw amino-acid sequence, 269 residues long: Aminoglycoside N(3)-acetyltransferase III (269 aa).

The protein belongs to the antibiotic N-acetyltransferase family.

It carries out the reaction a 2-deoxystreptamine antibiotic + acetyl-CoA = an N(3)-acetyl-2-deoxystreptamine antibiotic + CoA + H(+). Functionally, resistance to antibiotics containing the 2-deoxy-streptamine ring including gentamicin, kanamycin, tobramycin, neomycin and apramycin. The polypeptide is Aminoglycoside N(3)-acetyltransferase III (aac3-Vb) (Serratia marcescens).